The following is a 696-amino-acid chain: DNA ligase (696 aa).

NAD(+) is bound by residues 41–45, 90–91, and glutamate 120; these read DGQYD and SL. Lysine 122 acts as the N6-AMP-lysine intermediate in catalysis. Residues arginine 143, glutamate 180, lysine 296, and lysine 320 each coordinate NAD(+). Positions 414, 417, 433, and 439 each coordinate Zn(2+). One can recognise a BRCT domain in the interval 603–692; it reads STPRTLEGLT…PDAVARPAEE (90 aa).

The protein belongs to the NAD-dependent DNA ligase family. LigA subfamily. Mg(2+) is required as a cofactor. It depends on Mn(2+) as a cofactor.

The enzyme catalyses NAD(+) + (deoxyribonucleotide)n-3'-hydroxyl + 5'-phospho-(deoxyribonucleotide)m = (deoxyribonucleotide)n+m + AMP + beta-nicotinamide D-nucleotide.. DNA ligase that catalyzes the formation of phosphodiester linkages between 5'-phosphoryl and 3'-hydroxyl groups in double-stranded DNA using NAD as a coenzyme and as the energy source for the reaction. It is essential for DNA replication and repair of damaged DNA. In Kineococcus radiotolerans (strain ATCC BAA-149 / DSM 14245 / SRS30216), this protein is DNA ligase.